Consider the following 62-residue polypeptide: Large ribosomal subunit protein bL28 (62 aa).

The segment at 1–24 is disordered; that stretch reads MARKCVITGRKTKAGNNRSHAMNS. The span at 14–24 shows a compositional bias: polar residues; that stretch reads AGNNRSHAMNS.

It belongs to the bacterial ribosomal protein bL28 family.

This is Large ribosomal subunit protein bL28 from Bacillus pumilus (strain SAFR-032).